The primary structure comprises 156 residues: RNA polymerase sigma factor SigS (156 aa).

The Polymerase core binding signature appears at 29-44 (EYYQLLLIKMWQLSQI). The H-T-H motif DNA-binding region spans 126–145 (QFEIAEIMSLSLSTIKLIKT).

Belongs to the sigma-70 factor family.

In terms of biological role, sigma factors are initiation factors that promote the attachment of RNA polymerase to specific initiation sites and are then released. Sigma-S contributes to the protection against external stress, thus playing a role in cellular fitness and survival. This chain is RNA polymerase sigma factor SigS (sigS), found in Staphylococcus aureus (strain bovine RF122 / ET3-1).